The chain runs to 400 residues: Queuine tRNA-ribosyltransferase (400 aa).

The active-site Proton acceptor is the D93. Substrate-binding positions include 93 to 97 (DSGGF), D166, and G247. Positions 277 to 283 (GIGDVDD) are RNA binding. The active-site Nucleophile is the D296. Residues 301 to 305 (TRLGR) form an RNA binding; important for wobble base 34 recognition region. Residues C338, C340, C343, and H369 each contribute to the Zn(2+) site.

It belongs to the queuine tRNA-ribosyltransferase family. Homodimer. Within each dimer, one monomer is responsible for RNA recognition and catalysis, while the other monomer binds to the replacement base PreQ1. Zn(2+) is required as a cofactor.

The catalysed reaction is 7-aminomethyl-7-carbaguanine + guanosine(34) in tRNA = 7-aminomethyl-7-carbaguanosine(34) in tRNA + guanine. Its pathway is tRNA modification; tRNA-queuosine biosynthesis. Catalyzes the base-exchange of a guanine (G) residue with the queuine precursor 7-aminomethyl-7-deazaguanine (PreQ1) at position 34 (anticodon wobble position) in tRNAs with GU(N) anticodons (tRNA-Asp, -Asn, -His and -Tyr). Catalysis occurs through a double-displacement mechanism. The nucleophile active site attacks the C1' of nucleotide 34 to detach the guanine base from the RNA, forming a covalent enzyme-RNA intermediate. The proton acceptor active site deprotonates the incoming PreQ1, allowing a nucleophilic attack on the C1' of the ribose to form the product. After dissociation, two additional enzymatic reactions on the tRNA convert PreQ1 to queuine (Q), resulting in the hypermodified nucleoside queuosine (7-(((4,5-cis-dihydroxy-2-cyclopenten-1-yl)amino)methyl)-7-deazaguanosine). The chain is Queuine tRNA-ribosyltransferase from Roseiflexus sp. (strain RS-1).